We begin with the raw amino-acid sequence, 273 residues long: Suppressor protein STM1 (273 aa).

Positions 1 to 153 (MSNPFDLLGN…PKTAQLSLQD (153 aa)) are disordered. Serine 2 is subject to N-acetylserine. Residues serine 32, serine 41, and serine 45 each carry the phosphoserine; by MTOR modification. Lysine 46 is covalently cross-linked (Glycyl lysine isopeptide (Lys-Gly) (interchain with G-Cter in ubiquitin)). 2 positions are modified to phosphoserine; by MTOR: serine 55 and serine 73. At serine 55 the chain carries Phosphoserine. Composition is skewed to basic and acidic residues over residues 60-77 (AIRD…KDVT), 89-104 (RATD…DTKK), and 111-124 (GDDK…KEAQ). Serine 118 bears the Phosphoserine mark. Glycyl lysine isopeptide (Lys-Gly) (interchain with G-Cter in ubiquitin) cross-links involve residues lysine 121 and lysine 171. Residue threonine 181 is modified to Phosphothreonine; by MTOR. A Glycyl lysine isopeptide (Lys-Gly) (interchain with G-Cter in ubiquitin) cross-link involves residue lysine 184. Threonine 218 bears the Phosphothreonine; by MTOR mark. The tract at residues 219–273 (RKNFGDRNNNSRNNFNNRRGGRGARKGNNTANATNSANTVQKNRNIDVSNLPSLA) is disordered. Composition is skewed to low complexity over residues 224–236 (DRNN…FNNR) and 244–257 (KGNN…SANT). Phosphoserine is present on serine 229. Polar residues predominate over residues 258-273 (VQKNRNIDVSNLPSLA).

It belongs to the SERBP1-HABP4 family. Associates with mature 80S ribosomes. Binds to the head domain of the 40S ribosomal subunit and prevents mRNA binding by inserting its alpha-helix domain towards the mRNA entry tunnel at the decoding site, where it blocks the binding of tRNA and mRNA at the A- and P-sites. Interacts with EFT1; interaction sequesters EFT1 at the A-site of the ribosome, thereby blocking the interaction sites of the mRNA-tRNA complex, promoting ribosome stabilization and hibernation. Interacts with CDC13. Associates with the telomere-proximal Y' element. In terms of processing, phosphorylation by TORC1 upon nutrient replenishment inhibits STM1 and causes its release from dormant ribosomes.

The protein resides in the cytoplasm. Its subcellular location is the nucleus. It is found in the perinuclear region. Its function is as follows. Ribosome preservation factor that protect a small pool of nontranslating, vacant ribosomes in cells under nutrient starvation conditions. Under nutrient-limiting conditions, cells reduce ribosome biogenesis and degrade ribosomes via autophagy (ribophagy) or proteasomal degradation. To avoid excessive degradation during starvation, STM1 binds to and protects 80S ribosomes from proteasomal degradation. Under nutrient-sufficient conditions, TORC1 phosphorylates and inhibits STM1 to prevent formation of dormant 80S ribosomes. Acts as an inhibitor of mRNA translation by promoting ribosome hibernation: clamps the two ribosomal subunits, thereby preventing their dissociation, and inhibits translation by excluding mRNA-binding. Acts via its association with eEF2 (EFT1), promoting ribosome stabilization and storage in an inactive state. May also repress translation by preventing association of eEF3 (YEF3 and HEF3) with ribosomes. Binds specifically G4 quadruplex (these are four-stranded right-handed helices, stabilized by guanine base quartets) and purine motif triplex (characterized by a third, antiparallel purine-rich DNA strand located within the major groove of a homopurine stretch of duplex DNA) nucleic acid structures. These structures may be present at telomeres or in rRNAs. Acts with CDC13 to control telomere length homeostasis. Involved in the control of the apoptosis-like cell death. The chain is Suppressor protein STM1 from Saccharomyces cerevisiae (strain ATCC 204508 / S288c) (Baker's yeast).